The chain runs to 1029 residues: Multiple C2 domain and transmembrane region protein 6 (1029 aa).

The C2 1 domain maps to methionine 1–lysine 111. The interval threonine 187–proline 224 is disordered. C2 domains follow at residues arginine 277–tyrosine 398, arginine 437–phenylalanine 562, and phenylalanine 605–tyrosine 727. Positions 310, 316, 363, 365, and 371 each coordinate Ca(2+). The next 2 helical transmembrane spans lie at leucine 864 to isoleucine 884 and phenylalanine 976 to isoleucine 996.

Belongs to the MCTP family. It depends on Ca(2+) as a cofactor. Expressed in the vascular tissues of cotyledons and rosette leaves. Accumulates in roots caps and shoot apical meristems (SAMs). Observed in flowers.

It is found in the cell membrane. The protein localises to the cytoplasm. The protein resides in the endosome membrane. In terms of biological role, regulates flowering time under long days. May function as a signaling molecule by regulating the trafficking of other regulators. This Arabidopsis thaliana (Mouse-ear cress) protein is Multiple C2 domain and transmembrane region protein 6.